The following is a 127-amino-acid chain: Apolipoprotein C-IV (127 aa).

A signal peptide spans 1–27 (MSLLRNRLQDLPALCLCVLVLACIGAC).

It belongs to the apolipoprotein C4 family.

Its subcellular location is the secreted. May participate in lipoprotein metabolism. The protein is Apolipoprotein C-IV (APOC4) of Papio anubis (Olive baboon).